Reading from the N-terminus, the 276-residue chain is Elongation factor Ts (276 aa).

The involved in Mg(2+) ion dislocation from EF-Tu stretch occupies residues 81-84; the sequence is TDFV.

Belongs to the EF-Ts family.

Its subcellular location is the cytoplasm. Its function is as follows. Associates with the EF-Tu.GDP complex and induces the exchange of GDP to GTP. It remains bound to the aminoacyl-tRNA.EF-Tu.GTP complex up to the GTP hydrolysis stage on the ribosome. The protein is Elongation factor Ts of Leifsonia xyli subsp. xyli (strain CTCB07).